Consider the following 128-residue polypeptide: Large ribosomal subunit protein uL22 (128 aa).

Belongs to the universal ribosomal protein uL22 family. In terms of assembly, part of the 50S ribosomal subunit.

This protein binds specifically to 23S rRNA; its binding is stimulated by other ribosomal proteins, e.g. L4, L17, and L20. It is important during the early stages of 50S assembly. It makes multiple contacts with different domains of the 23S rRNA in the assembled 50S subunit and ribosome. Its function is as follows. The globular domain of the protein is located near the polypeptide exit tunnel on the outside of the subunit, while an extended beta-hairpin is found that lines the wall of the exit tunnel in the center of the 70S ribosome. In Prochlorococcus marinus (strain MIT 9515), this protein is Large ribosomal subunit protein uL22.